Reading from the N-terminus, the 177-residue chain is Large ribosomal subunit protein uL6 (177 aa).

The protein belongs to the universal ribosomal protein uL6 family. Part of the 50S ribosomal subunit.

Functionally, this protein binds to the 23S rRNA, and is important in its secondary structure. It is located near the subunit interface in the base of the L7/L12 stalk, and near the tRNA binding site of the peptidyltransferase center. This Cereibacter sphaeroides (strain ATCC 17025 / ATH 2.4.3) (Rhodobacter sphaeroides) protein is Large ribosomal subunit protein uL6.